The sequence spans 482 residues: MASIRELHQQLVSKERSAKEITQDALEKIQQLEPKVHAFLTLTAEQALAQAERVDQQIATGTEIGLLAGIPIAIKDNLCTKGIPTTCGSKILQGFIPPYESTVTSRLAAAGAVMVGKTNLDEFAMGSSTENSAYQLTANPWDLQRVPGGSSGGSAAAVAAGETLIALGSDTGGSIRQPASFCGVVGLKPTYGLVSRYGLVAYASSLDQIGPFATNVEDAALLLGAIAGHDPQDSTSLNVPIPDYTQFLIPDLKGKKIGIIQETYGEGLDPQVEQVTHKAIQQLEELGAEVREISCPRFRYGLPTYYIIAPSEASANLARYDGVKYGFRSPDPENLLSMYTRTRAEGFGPEVKRRIMIGTYALSAGYYDAYYLKAQKVRTLIKQDFEAAFEQVDVLVCPTAPTTAFAAGAKTADPLSMYLSDLMTIPVNLAGLPGLSLPCGFDQQGLPIGLQLIGNVLREDLVFQVAYAYEQATPWHDRHPQL.

Residues Lys75 and Ser150 each act as charge relay system in the active site. Ser174 acts as the Acyl-ester intermediate in catalysis.

This sequence belongs to the amidase family. GatA subfamily. Heterotrimer of A, B and C subunits.

It catalyses the reaction L-glutamyl-tRNA(Gln) + L-glutamine + ATP + H2O = L-glutaminyl-tRNA(Gln) + L-glutamate + ADP + phosphate + H(+). In terms of biological role, allows the formation of correctly charged Gln-tRNA(Gln) through the transamidation of misacylated Glu-tRNA(Gln) in organisms which lack glutaminyl-tRNA synthetase. The reaction takes place in the presence of glutamine and ATP through an activated gamma-phospho-Glu-tRNA(Gln). In Cyanothece sp. (strain PCC 7425 / ATCC 29141), this protein is Glutamyl-tRNA(Gln) amidotransferase subunit A.